The following is a 2134-amino-acid chain: MSSTPGLPTPGASLALRVSFVDVHPEVIPVQLWGLVGQRREEYVRLSREIQEAAATRGPWALGGASASPGELCLVQVGLMWHRCRVVSRQAQDSRVFLLDEGRTITAGAGSLAPGRSEFFHLPSEVLGCVLAGLVPAGGGGTGGGEPQQWSPRAVDFLSNLQGKEVHGRVLDVLLLHRLVLLEVPVVSQQMEELGLARQVPDSLFCSLLKRYLTAAGQGSSGAPVLPRAAPKQEHPGLDYFYPQLQLGVTEPVVVTQVCHPHRIHCQLRSLSQEIHRLSESMAQVYRAPVGTDDEDSGSATWEEREESPDKPGSPCASCGLDGQWYRALLLETFRPQRCAQVLHVDYGRKELVSCSSLRYLLPEYFRMPVVTYPCALYGLWDCGRGWSRSQVGDLKALILGQAVNAKIEFYCSFEHMYYVTLYGEDGINLNSAFGVQSCCLADWFLQSQGIEEEEEEDEDEVEAAFQSQSPAEEMEAEVSLPSLRSIRLKMNTFYDAQVEFVKSPSEFWIRLRKHKNTFSKLTKRMCSFYSSASKLDGVILRPEPDDLCCVKWKENGYYRATVTRLDSKSVDVFLVDRGNSENVDWCDVRMLLPQFRQLPILALKCTLADIWPLGKTWSQEATSFFKKTVLHKELVVHVLDKQDHQYVIEILDESRMGEENISKVIAQAGFAKFQEFETKENIRLSAHSPGHVSGHFMAEPSKITSAKKAEGDQRAKKDNKTLSVSEALADTVSLSNLSTAQDTEKVTSDPSLLMLNFLKTKPDCCGKGELEVGSTVEVKVSHIENPGSFWCQLMRNAQGFRTLMCDIEDYCKSSEPSPYEGDTRVCLAKRTASGRWSRALISGAHSLEHVRVVFVDYGDRDVVSTKDILSVSDVFFQVRAQAFRCSLYNLIQPMGENPFVWDEKAVQAFSGFIDSARQNNLELKCTVFALASRHEEEWFNVVDLLTPFQSACRFLVEKRLARPVKHQKPLEPSVQLHSYYYSTHDLKIGSEELVYVTHADDPWTFYCQLARNINVLEQLSYNIMQLSKALLNLKASTLAPGTLCLARYTDGNWYRGIIIEKEPSKVFFVDFGNTYIAVDHLLPIPRDAHDVLLLPMQALKCSLSDIPHHIPEEVTAWFQETVLDKSLKALVVAKDPDGRLIIELYDDSVQINASINEKLGLLGYKNRTRRKEKENEIILHETKALEDKKESVKPSLADYLGKPGESKAHSIEIMGESCKPKMGPACKELRYLQGSAKANLVPPYQDSVGNKNDGGFPLTREKKEDIFASSPMSGTKLDSALPERRMGEPSGRDLPPKFCEFPQKTIAPGFKTSVYVSHINDLSDFYIQLIEDEAEINNLSERLNDVRTRPQYHTGPQWQSGDVICAVFPEDNLWYRALVMEQQPNGLLSVQFIDYGNMSVVHTNRTGRLGPVDAVLPALCLHCSLWGLSVPVCKEMVSYFSQRTDEAQIRCEFVKFQGTWEVILADEHGVIAEDMISRFPCNGNSQAGLTTQTMKGDCLKIANKPNTDTSVLLNWYNPKAKLIKAYATVIDGPEYFWCQFADSEKLQYLETEVQSAGKQLSDRRSCTQCPQIGDPCIVRYREDGHYYRALITNICDGELASVRLVDFGNAEDCVDAKELWSIPSELLLVPMQAFPCCLAGFSVSGGVCPQEGNDYFYDIVTEDVLDITILEIKRDVCNIPLAIVELRSKGENINEKMKKYAKTGVPKNDLSSEKRGPERKGSLASPDLGLKKPSHKIAQDKTFYGEARASELSERLEKDLNIETKTSKFYERSTRSIFNAFENSCKGKMGSERLEGSMDYHFVDRAKFDNNYLITGFNPILAHASEPKELLELSSLEVPLSADNDDECKEFLELESIELQHSPAGEEEKEELGLGSPMAPLSPGCQAGATLESFMMQLPLDCEAEKQLELKLPTPQLSLEDSISPLSAAVSQDIQGSRCSEDERKAGYMGSSDDDHSRSPLLQHGKGGNSPAHDGRNLSEEEFPQFESRDSAALLAPLFSEEEAREGRKCGSMVPAQLQSTYTLKGFSVGSKCVVWSSLRNTWSKCEILELAEEGTRVLNLSNGVEETVSPENVWNGIPKVDKRPSEAVFQTVGKDLPFMPSDDATTKGFSSVSEEEACGGDADSLSTAKLNI.

Residues 287–315 (RAPVGTDDEDSGSATWEEREESPDKPGSP) form a disordered region. T292 carries the phosphothreonine modification. Tudor domains are found at residues 309–368 (PDKP…YFRM), 542–599 (RPEP…FRQL), 820–879 (YEGD…FFQV), and 1038–1092 (TLAP…AHDV). The tract at residues 1271 to 1296 (SPMSGTKLDSALPERRMGEPSGRDLP) is disordered. Residues 1282–1296 (LPERRMGEPSGRDLP) show a composition bias toward basic and acidic residues. Tudor domains lie at 1358–1417 (QWQS…DAVL) and 1570–1630 (CPQI…LLLV). Disordered regions lie at residues 1699–1733 (KKYA…GLKK) and 1860–1885 (LQHS…LSPG). A compositionally biased stretch (basic and acidic residues) spans 1711–1722 (LSSEKRGPERKG). S1723 and S1726 each carry phosphoserine. Position 1925 is a phosphoserine (S1925). Residues 1930–1939 (AVSQDIQGSR) show a composition bias toward polar residues. The tract at residues 1930 to 1985 (AVSQDIQGSRCSEDERKAGYMGSSDDDHSRSPLLQHGKGGNSPAHDGRNLSEEEFP) is disordered. 3 positions are modified to phosphoserine: S1980, S2063, and S2115.

As to quaternary structure, found in a mRNP complex (i.e. messenger ribonucleoproteins which correspond to mRNA with bound proteins), at least composed of TDRD1, TDRD6, TDRD7 and DDX4. Found in a complex, at least composed of PIWIL1, PIWIL2, DDX4 and TDRD6. Interacts with Tex19.1 and probably Tex19.2. Interacts with PRMT5. Interacts with SNRPB (when methylated); to trigger spliceosome formation. In terms of processing, undergoes proteolytic cleavage near the C-terminal by an unknown protease during the transition from meiosis I to meiosis II in primary spermatocytes. As to expression, testis specific. Expressed in primary spermatocytes at post natal (PN) day 17.5. Expressed in midpachytene stage of primary spermatocytes at PN16 and in round spermatids at PN22 (at protein level).

The protein resides in the cytoplasm. Tudor domain-containing protein involved in germ cell development, more specifically the formation of chromatoid body (during spermiogenesis), Balbiani body (during oogenesis), germ plasm (upon fertilization), and for proper miRNA expression and spliceosome maturation. Essential for RNA-dependent helicase UPF1 localization to chromatoid body, for UPF1-UPF2 and UPF1-DDX4 interactions which are required for mRNA degradation, using the extended 3' UTR-triggered nonsense-mediated mRNA decay (NMD) pathway. Involved in spliceosome maturation and mRNA splicing in prophase I spermatocytes through interaction with arginine N-methyltransferase PRMT5 and symmetrically arginine dimethylated SNRPB (small nuclear ribonucleoprotein-associated protein). This is Tudor domain-containing protein 6 from Mus musculus (Mouse).